Here is a 393-residue protein sequence, read N- to C-terminus: Selenide, water dikinase (393 aa).

The tract at residues 1 to 21 is disordered; the sequence is MSEKEGKVIPETNGMKRPRFD. The active site involves C42. Residues K45, 68 to 70, D93, D116, and 167 to 170 contribute to the ATP site; these read GMD and GGQT. D70 provides a ligand contact to Mg(2+). A Mg(2+)-binding site is contributed by D116. D273 provides a ligand contact to Mg(2+).

It belongs to the selenophosphate synthase 1 family. Class I subfamily. Homodimer. Mg(2+) serves as cofactor.

It catalyses the reaction hydrogenselenide + ATP + H2O = selenophosphate + AMP + phosphate + 2 H(+). Synthesizes selenophosphate from selenide and ATP. The chain is Selenide, water dikinase from Trypanosoma brucei brucei (strain 927/4 GUTat10.1).